The following is a 215-amino-acid chain: Octanoyltransferase (215 aa).

The BPL/LPL catalytic domain occupies 31–206 (PDSQDEIWLV…QLVKHLDYAE (176 aa)). Residues 70-77 (RGGQVTYH), 137-139 (SLG), and 150-152 (GLA) each bind substrate. The Acyl-thioester intermediate role is filled by Cys-168.

The protein belongs to the LipB family.

The protein resides in the cytoplasm. The catalysed reaction is octanoyl-[ACP] + L-lysyl-[protein] = N(6)-octanoyl-L-lysyl-[protein] + holo-[ACP] + H(+). The protein operates within protein modification; protein lipoylation via endogenous pathway; protein N(6)-(lipoyl)lysine from octanoyl-[acyl-carrier-protein]: step 1/2. Functionally, catalyzes the transfer of endogenously produced octanoic acid from octanoyl-acyl-carrier-protein onto the lipoyl domains of lipoate-dependent enzymes. Lipoyl-ACP can also act as a substrate although octanoyl-ACP is likely to be the physiological substrate. This Pseudomonas putida (strain ATCC 700007 / DSM 6899 / JCM 31910 / BCRC 17059 / LMG 24140 / F1) protein is Octanoyltransferase.